The sequence spans 323 residues: L-lactate dehydrogenase (323 aa).

Positions 12, 33, and 65 each coordinate NAD(+). Residues Arg94 and 126-129 (NPCD) each bind substrate. Thr149 provides a ligand contact to NAD(+). A substrate-binding site is contributed by 154–157 (ETMR). His181 functions as the Proton acceptor in the catalytic mechanism. Thr234 is a binding site for substrate.

It belongs to the LDH/MDH superfamily. LDH family. As to quaternary structure, homotetramer.

Its subcellular location is the cytoplasm. It catalyses the reaction (S)-lactate + NAD(+) = pyruvate + NADH + H(+). It participates in fermentation; pyruvate fermentation to lactate; (S)-lactate from pyruvate: step 1/1. Catalyzes the conversion of lactate to pyruvate. The protein is L-lactate dehydrogenase of Mycoplasmoides gallisepticum (strain R(low / passage 15 / clone 2)) (Mycoplasma gallisepticum).